The sequence spans 502 residues: Ubiquilin (502 aa).

Residues 8–83 (IKVHVKSPSN…VHLVIRNQAR (76 aa)) form the Ubiquitin-like domain. The span at 84 to 115 (PTPAPAAATPTASSAPSSNPTPSSQPNPTNNP) shows a compositional bias: low complexity. The disordered stretch occupies residues 84–136 (PTPAPAAATPTASSAPSSNPTPSSQPNPTNNPFAAMGGMGSPADILNNPDAMR). STI1 domains follow at residues 124–157 (SPADILNNPDAMRSVMDNPITQQLLGNPEFMRTI) and 161–200 (NPQFQALIERNPEVGHILNDPNVMRQTMEMIRNPNMFQEM). The span at 235-251 (SATNSLSGNPFASLRGD) shows a compositional bias: polar residues. Residues 235 to 294 (SATNSLSGNPFASLRGDQSSEPRVDRAGQENNEALPNPWASNANQATNNQSNNRSADFNS) are disordered. The span at 252–262 (QSSEPRVDRAG) shows a compositional bias: basic and acidic residues. The segment covering 274 to 290 (ASNANQATNNQSNNRSA) has biased composition (low complexity). STI1 domains follow at residues 289–327 (SADFNSLLDSPGISSLMEQMMSNPSMQASMFSPEVINSI) and 351–387 (NPQISEGIRRSFPQMLNMMSDPSVMEAMRNPRVSEAF). The UBA domain maps to 455–501 (PVNPEQTYASQLEQLQSMGFSDRARNVAALTATFGDLNAAVERLLNS).

In terms of tissue distribution, expressed in the pharynx, hypodermis, intestine and head neurons. Upon ER stress, expressed predominantly in pharyngeal muscle, hypodermis and intestine.

Functionally, may play a role in the ER-associated protein degradation pathway (ERAD) possibly via its interaction with ER-localized proteins ubxn-4 and cdc-48.1 and/or cdc48.2, providing a link between the polyubiquitinated ERAD substrates and the proteasome. Also plays an important role in the regulation of other protein degradation mechanisms and pathways including ubiquitin-proteasome system (UPS) and autophagy. Mediates the proteasomal targeting of misfolded or accumulated proteins for degradation by binding (via UBA domain) to their polyubiquitin chains and by interacting (via ubiquitin-like domain) with the subunits of the proteasome. Collaborates with POST (F36D4.5) in the export of ubiquitinated proteins from the nucleus to the cytoplasm. Also acts as a regulator of DNA repair by inhibiting homologous recombination repair, thereby redirecting double-strand break repair toward non-homologous end joining (NHEJ). This chain is Ubiquilin, found in Caenorhabditis elegans.